A 491-amino-acid chain; its full sequence is ATP synthase subunit beta, chloroplastic (491 aa).

163–170 (GGAGVGKT) lines the ATP pocket.

It belongs to the ATPase alpha/beta chains family. In terms of assembly, F-type ATPases have 2 components, CF(1) - the catalytic core - and CF(0) - the membrane proton channel. CF(1) has five subunits: alpha(3), beta(3), gamma(1), delta(1), epsilon(1). CF(0) has four main subunits: a(1), b(1), b'(1) and c(9-12).

It localises to the plastid. It is found in the chloroplast thylakoid membrane. It carries out the reaction ATP + H2O + 4 H(+)(in) = ADP + phosphate + 5 H(+)(out). In terms of biological role, produces ATP from ADP in the presence of a proton gradient across the membrane. The catalytic sites are hosted primarily by the beta subunits. This is ATP synthase subunit beta, chloroplastic from Nephroselmis olivacea (Green alga).